The primary structure comprises 261 residues: Histone H3-like centromeric protein cpar-1 (261 aa).

Positions 80–150 are disordered; that stretch reads TVGSNSTNLV…AGSSSSDRVR (71 aa). Residues 113-127 are compositionally biased toward polar residues; sequence AANSHHQSPINVGNR. The span at 132–146 shows a compositional bias: low complexity; sequence GTNGRNGSRAGSSSS. Positions 164–261 are H3-like; it reads YRPGQKALEE…LYRRLCLPNL (98 aa).

The protein belongs to the histone H3 family. As to quaternary structure, forms a nucleosome-like histone octamer containing two molecules each of H2A, H2B, cpar-1 and H4 assembled in one cpar-1-H4 heterotetramer and two H2A-H2B heterodimers. Post-translationally, cleaved at the onset of meiotic anaphase I, likely by separase sep-1.

The protein resides in the nucleus. It localises to the chromosome. In terms of biological role, histone H3-like variant which exclusively replaces conventional H3 in the nucleosome core of centromeric chromatin at the inner plate of the kinetochore. Required for recruitment and assembly of kinetochore proteins, mitotic progression and chromosome segregation. May serve as an epigenetic mark that propagates centromere identity through replication and cell division. Not required for chromosome segregation during meiosis. This Caenorhabditis elegans protein is Histone H3-like centromeric protein cpar-1.